A 181-amino-acid chain; its full sequence is Crossover junction endodeoxyribonuclease RuvC (181 aa).

Catalysis depends on residues Asp8, Glu67, and Asp139. 3 residues coordinate Mg(2+): Asp8, Glu67, and Asp139.

It belongs to the RuvC family. In terms of assembly, homodimer which binds Holliday junction (HJ) DNA. The HJ becomes 2-fold symmetrical on binding to RuvC with unstacked arms; it has a different conformation from HJ DNA in complex with RuvA. In the full resolvosome a probable DNA-RuvA(4)-RuvB(12)-RuvC(2) complex forms which resolves the HJ. Mg(2+) is required as a cofactor.

Its subcellular location is the cytoplasm. The catalysed reaction is Endonucleolytic cleavage at a junction such as a reciprocal single-stranded crossover between two homologous DNA duplexes (Holliday junction).. In terms of biological role, the RuvA-RuvB-RuvC complex processes Holliday junction (HJ) DNA during genetic recombination and DNA repair. Endonuclease that resolves HJ intermediates. Cleaves cruciform DNA by making single-stranded nicks across the HJ at symmetrical positions within the homologous arms, yielding a 5'-phosphate and a 3'-hydroxyl group; requires a central core of homology in the junction. The consensus cleavage sequence is 5'-(A/T)TT(C/G)-3'. Cleavage occurs on the 3'-side of the TT dinucleotide at the point of strand exchange. HJ branch migration catalyzed by RuvA-RuvB allows RuvC to scan DNA until it finds its consensus sequence, where it cleaves and resolves the cruciform DNA. The sequence is that of Crossover junction endodeoxyribonuclease RuvC from Acinetobacter baylyi (strain ATCC 33305 / BD413 / ADP1).